The sequence spans 196 residues: MSEENKLSESEIKEEAVQTLERINFWISNCDTKISFSLAFAGILLGGFFSSGIITGSLNKLMKGLKEIDKDTPYLKIQYLEITTIVLVVFIILMIVSLTYLFRGKKGSIDTGVFNEADLSKDSILFFGTIQNKSFISFKNSVIEIKKDDLVNDYLSQVYINSKICNRKFTLYNKGVNWLIASTIVFIILNGMFLFL.

3 helical membrane-spanning segments follow: residues 34–54, 82–102, and 176–196; these read ISFS…SGII, ITTI…TYLF, and VNWL…FLFL.

Its subcellular location is the cell inner membrane. Functionally, pycsar (pyrimidine cyclase system for antiphage resistance) provides immunity against bacteriophage. The pyrimidine cyclase (PycC) synthesizes cyclic nucleotides in response to infection; these serve as specific second messenger signals. The signals activate the adjacent effector, leading to bacterial cell death and abortive phage infection. A clade C Pycsar system. The effector gene of a two-gene Pycsar system. Expression of this and adjacent uridylate cyclase GmPycC (AC P0DV42) probably confers resistance to bacteriophage. The genes are probably only expressed in response to bacteriophage infection. Probably only responds to cUMP (produced by its cognate NTP cyclase), acts by impairing membrane integrity. The chain is Pycsar effector protein GmPycTM from Gulbenkiania mobilis.